A 287-amino-acid chain; its full sequence is Mitochondrial glycine transporter A (287 aa).

Solcar repeat units lie at residues 7–97, 104–188, and 198–282; these read HPAV…LKQR, PGPL…TKHL, and YAPV…LMAQ. Transmembrane regions (helical) follow at residues 13-38, 72-98, 110-135, 163-186, 202-228, and 257-275; these read FMCG…TRLQ, GVSP…KQRY, VLLG…TRFE, GLMA…SQTK, ANFS…KTHI, and GAVP…AWTV.

It belongs to the mitochondrial carrier (TC 2.A.29) family. SLC25A38 subfamily. As to expression, at 24 hours post-fertilization, expressed predominantly in posterior blood island, posterior cardinal vein and circulating blood, as well as in somites, brain and retina. At 34 hours post-fertilization, becomes restricted to posterior blood island and circulating blood.

Its subcellular location is the mitochondrion inner membrane. It catalyses the reaction glycine(in) = glycine(out). Mitochondrial glycine transporter that imports glycine into the mitochondrial matrix. Plays an important role in providing glycine for the first enzymatic step in heme biosynthesis, the condensation of glycine with succinyl-CoA to produce 5-aminolevulinate (ALA) in the mitochondrial matrix. Required during erythropoiesis. Its function is as follows. May play a role as pro-apoptotic protein that induces caspase-dependent apoptosis. The sequence is that of Mitochondrial glycine transporter A (slc25a38a) from Danio rerio (Zebrafish).